A 335-amino-acid chain; its full sequence is DNA polymerase beta (335 aa).

Residue Lys41 forms a Glycyl lysine isopeptide (Lys-Gly) (interchain with G-Cter in ubiquitin) linkage. Residue Lys60 participates in K(+) binding. Lys60 is a Na(+) binding site. Lys61 is covalently cross-linked (Glycyl lysine isopeptide (Lys-Gly) (interchain with G-Cter in ubiquitin)). Leu62 and Val65 together coordinate K(+). The Na(+) site is built by Leu62 and Val65. The Nucleophile; Schiff-base intermediate with DNA; for 5'-dRP lyase activity role is filled by Lys72. Lys72 is modified (N6-acetyllysine). Lys81 participates in a covalent cross-link: Glycyl lysine isopeptide (Lys-Gly) (interchain with G-Cter in ubiquitin). Arg83 is modified (omega-N-methylarginine; by PRMT6). Thr101, Val103, and Ile106 together coordinate K(+). Residues Thr101, Val103, and Ile106 each coordinate Na(+). An a 2'-deoxyribonucleoside 5'-triphosphate-binding site is contributed by Arg149. Omega-N-methylarginine; by PRMT6 is present on Arg152. 4 residues coordinate a 2'-deoxyribonucleoside 5'-triphosphate: Ser180, Arg183, Gly189, and Asp190. Residues 183–192 (RGAESSGDMD) form a DNA-binding region. Residues Asp190, Asp192, and Asp256 each contribute to the Mg(2+) site.

The protein belongs to the DNA polymerase type-X family. As to quaternary structure, monomer. Binds single-stranded DNA (ssDNA). Interacts with APEX1, LIG1, LIG3, FEN1, PCNA and XRCC1. Interacts with HUWE1/ARF-BP1, STUB1/CHIP and USP47. Interacts with FAM168A. It depends on Mg(2+) as a cofactor. Methylation by PRMT6 stimulates the polymerase activity by enhancing DNA binding and processivity. Post-translationally, ubiquitinated at Lys-41, Lys-61 and Lys-81: monoubiquitinated by HUWE1/ARF-BP1. Monoubiquitinated protein is then the target of STUB1/CHIP, which catalyzes polyubiquitination from monoubiquitin, leading to degradation by the proteasome. USP47 mediates the deubiquitination of monoubiquitinated protein, preventing polyubiquitination by STUB1/CHIP and its subsequent degradation.

It is found in the nucleus. The protein localises to the cytoplasm. It carries out the reaction DNA(n) + a 2'-deoxyribonucleoside 5'-triphosphate = DNA(n+1) + diphosphate. It catalyses the reaction a 5'-end 2'-deoxyribose-2'-deoxyribonucleotide-DNA = (2E,4S)-4-hydroxypenten-2-al-5-phosphate + a 5'-end 5'-phospho-2'-deoxyribonucleoside-DNA + H(+). The enzyme catalyses 2'-deoxyribonucleotide-(2'-deoxyribose 5'-phosphate)-2'-deoxyribonucleotide-DNA = a 3'-end 2'-deoxyribonucleotide-(2,3-dehydro-2,3-deoxyribose 5'-phosphate)-DNA + a 5'-end 5'-phospho-2'-deoxyribonucleoside-DNA + H(+). Repair polymerase that plays a key role in base-excision repair. During this process, the damaged base is excised by specific DNA glycosylases, the DNA backbone is nicked at the abasic site by an apurinic/apyrimidic (AP) endonuclease, and POLB removes 5'-deoxyribose-phosphate from the preincised AP site acting as a 5'-deoxyribose-phosphate lyase (5'-dRP lyase); through its DNA polymerase activity, it adds one nucleotide to the 3' end of the arising single-nucleotide gap. Conducts 'gap-filling' DNA synthesis in a stepwise distributive fashion rather than in a processive fashion as for other DNA polymerases. It is also able to cleave sugar-phosphate bonds 3' to an intact AP site, acting as an AP lyase. This Rattus norvegicus (Rat) protein is DNA polymerase beta (Polb).